The chain runs to 426 residues: Histidine--tRNA ligase (426 aa).

The protein belongs to the class-II aminoacyl-tRNA synthetase family. Homodimer.

Its subcellular location is the cytoplasm. The enzyme catalyses tRNA(His) + L-histidine + ATP = L-histidyl-tRNA(His) + AMP + diphosphate + H(+). This is Histidine--tRNA ligase from Shewanella baltica (strain OS223).